Consider the following 226-residue polypeptide: Ribonuclease 3 (226 aa).

In terms of domain architecture, RNase III spans 7–134 (KQNLKKKYGI…FNGALFLDQG (128 aa)). E47 provides a ligand contact to Mg(2+). The active site involves D51. Positions 120 and 123 each coordinate Mg(2+). Residue E123 is part of the active site. One can recognise a DRBM domain in the interval 160-226 (DYKTELQERL…AAQAALDKNK (67 aa)). Positions 201 to 226 (KVSEGQGRNKKAAEQQAAQAALDKNK) are disordered. The segment covering 214 to 226 (EQQAAQAALDKNK) has biased composition (low complexity).

The protein belongs to the ribonuclease III family. In terms of assembly, homodimer. It depends on Mg(2+) as a cofactor.

It localises to the cytoplasm. It catalyses the reaction Endonucleolytic cleavage to 5'-phosphomonoester.. Its function is as follows. Digests double-stranded RNA. Involved in the processing of primary rRNA transcript to yield the immediate precursors to the large and small rRNAs (23S and 16S). Processes some mRNAs, and tRNAs when they are encoded in the rRNA operon. Processes pre-crRNA and tracrRNA of type II CRISPR loci if present in the organism. The polypeptide is Ribonuclease 3 (Lactobacillus johnsonii (strain CNCM I-12250 / La1 / NCC 533)).